The sequence spans 204 residues: LexA repressor (204 aa).

Residues 27 to 47 (VREIGEAVGLASSSTVHGHLA) constitute a DNA-binding region (H-T-H motif). Active-site for autocatalytic cleavage activity residues include serine 126 and lysine 164.

The protein belongs to the peptidase S24 family. As to quaternary structure, homodimer.

It catalyses the reaction Hydrolysis of Ala-|-Gly bond in repressor LexA.. Represses a number of genes involved in the response to DNA damage (SOS response), including recA and lexA. In the presence of single-stranded DNA, RecA interacts with LexA causing an autocatalytic cleavage which disrupts the DNA-binding part of LexA, leading to derepression of the SOS regulon and eventually DNA repair. This Listeria innocua serovar 6a (strain ATCC BAA-680 / CLIP 11262) protein is LexA repressor.